We begin with the raw amino-acid sequence, 96 residues long: Integration host factor subunit beta (96 aa).

This sequence belongs to the bacterial histone-like protein family. In terms of assembly, heterodimer of an alpha and a beta chain.

Functionally, this protein is one of the two subunits of integration host factor, a specific DNA-binding protein that functions in genetic recombination as well as in transcriptional and translational control. The sequence is that of Integration host factor subunit beta from Dichelobacter nodosus (strain VCS1703A).